The chain runs to 949 residues: Translation initiation factor IF-2 (949 aa).

Disordered stretches follow at residues 54–183, 217–288, and 305–357; these read FLKP…EAAP, LPAA…EVAL, and EVVA…EMQA. 2 stretches are compositionally biased toward basic and acidic residues: residues 67 to 92 and 101 to 164; these read DQEKPEEIEEKKEAPKSPKRGEERHI and IEAK…EEAA. 2 stretches are compositionally biased toward low complexity: residues 165–183 and 217–228; these read RAAAAAPAAPVAAPAEAAP and LPAAAPAAPSAP. Composition is skewed to basic and acidic residues over residues 235–288 and 330–339; these read PVEE…EVAL and KYQDNEDRLQ. The tr-type G domain maps to 445 to 619; that stretch reads TRPPVITVMG…EMLNLQSNPT (175 aa). Residues 454-461 form a G1 region; sequence GHVDHGKT. 454-461 serves as a coordination point for GTP; that stretch reads GHVDHGKT. Residues 479-483 form a G2 region; it reads GITQH. The interval 501–504 is G3; the sequence is DTPG. GTP is bound by residues 501–505 and 555–558; these read DTPGH and NKID. The interval 555–558 is G4; sequence NKID. Positions 591 to 593 are G5; sequence SAK.

The protein belongs to the TRAFAC class translation factor GTPase superfamily. Classic translation factor GTPase family. IF-2 subfamily.

The protein resides in the cytoplasm. In terms of biological role, one of the essential components for the initiation of protein synthesis. Protects formylmethionyl-tRNA from spontaneous hydrolysis and promotes its binding to the 30S ribosomal subunits. Also involved in the hydrolysis of GTP during the formation of the 70S ribosomal complex. The protein is Translation initiation factor IF-2 of Magnetococcus marinus (strain ATCC BAA-1437 / JCM 17883 / MC-1).